A 627-amino-acid chain; its full sequence is Neuronal acetylcholine receptor subunit alpha-4 (627 aa).

The N-terminal stretch at 1–31 (MELGGPGAPPPPLLPPLLLLLGAGFLPASSP) is a signal peptide. At 32 to 244 (VETRAHAEER…ITYAFVIRRL (213 aa)) the chain is on the extracellular side. Asn-59 carries N-linked (GlcNAc...) asparagine glycosylation. Residues Val-78 and Glu-80 each coordinate Ca(2+). N-linked (GlcNAc...) asparagine glycosylation is found at Asn-109 and Asn-176. 2 disulfides stabilise this stretch: Cys-163–Cys-177 and Cys-227–Cys-228. The helical transmembrane segment at 245-269 (PLFYTINLIVPCLLISCLTVLVFYL) threads the bilayer. Cys-273 carries the S-palmitoyl cysteine lipid modification. The next 2 helical transmembrane spans lie at 277–295 (VTLC…LLIT) and 311–332 (YLLF…VLNV). The Cytoplasmic portion of the chain corresponds to 333–600 (HHRSPRTHTM…WKYVAMVIDR (268 aa)). Low complexity predominate over residues 384–399 (PGFWPEPEGEPGVVSG). Residues 384–463 (PGFWPEPEGE…PPPSTRAPGL (80 aa)) form a disordered region. Ser-427 is modified (phosphoserine). Residues 444 to 458 (SPCPLPDSCRPPPST) are compositionally biased toward pro residues. Ser-541 carries the phosphoserine modification. Residues 601-619 (IFLWVFVIVCLLGTAGLFL) traverse the membrane as a helical segment.

This sequence belongs to the ligand-gated ion channel (TC 1.A.9) family. Acetylcholine receptor (TC 1.A.9.1) subfamily. Alpha-4/CHRNA4 sub-subfamily. As to quaternary structure, neuronal AChR is composed of two different types of subunits: alpha and beta. CHRNA4 forms heteropentameric neuronal acetylcholine receptors with CHRNB2 and CHRNB4, as well as CHRNA5 and CHRNB3 as accesory subunits. Found in two major stoichiometric forms, LS (low agonist sensitivity): (CHRNA4)3:(CHRNB2)2 and HS (high agonist sensitivity): (CHRNA4)2:(CHRNB2)3, the two stoichiometric forms differ in their unitary conductance, calcium permeability, ACh sensitivity and potentiation by divalent cation. Cells produce predominantly an (CHRNA4)3:(CHRNB2)2 nAChR. The (CHRNA4)2:(CHRNB2)3 expression is selectively up-regulated by nicotine and has lower single channel conductance and calcium permeability. In the striatum, also forms CHRNA4:CHRNA6:CHRNB2 complexes. Also found in the stoichiometric form: (CHRNA4:CHRNB2)2:CHRNB3. Interacts with RIC3; which is required for proper folding and assembly. Interacts with LYPD6.

It is found in the synaptic cell membrane. It localises to the cell membrane. The catalysed reaction is Ca(2+)(in) = Ca(2+)(out). The enzyme catalyses K(+)(in) = K(+)(out). It catalyses the reaction Na(+)(in) = Na(+)(out). Activated by a myriad of ligands such as acetylcholine, cytisine, nicotine, choline and epibatidine. Channel potentiation by calcium is stoichiometry-selective, CHRNA4:CHRNB2 nACh receptor is achieved by calcium association with topographically distinct sites framed by anionic residues within the CHRNA4 subunit and between the CHRNA4 and CHRNB2 subunits. nAChR activity is inhibited by the antagonist alpha-conotoxins BuIA, PnIA, GID and MII, small disulfide-constrained peptides from cone snails. Its function is as follows. Component of neuronal acetylcholine receptors (nAChRs) that function as pentameric, ligand-gated cation channels with high calcium permeability among other activities. nAChRs are excitatory neurotrasnmitter receptors formed by a collection of nAChR subunits known to mediate synaptic transmission in the nervous system and the neuromuscular junction. Each nAchR subunit confers differential attributes to channel properties, including activation, deactivation and desensitization kinetics, pH sensitivity, cation permeability, and binding to allosteric modulators. CHRNA4 forms heteropentameric neuronal acetylcholine receptors with CHRNB2 and CHRNB4, as well as CHRNA5 and CHRNB3 as accesory subunits. Is the most abundant nAChR subtype expressed in the central nervous system. Found in two major stoichiometric forms,(CHRNA4)3:(CHRNB2)2 and (CHRNA4)2:(CHRNB2)3, the two stoichiometric forms differ in their unitary conductance, calcium permeability, ACh sensitivity and potentiation by divalent cation. Involved in the modulation of calcium-dependent signaling pathways, influences the release of neurotransmitters, including dopamine, glutamate and GABA. This chain is Neuronal acetylcholine receptor subunit alpha-4 (CHRNA4), found in Mustela putorius furo (European domestic ferret).